The sequence spans 187 residues: Accessory gene regulator protein B (187 aa).

5 consecutive transmembrane segments (helical) span residues 49 to 69 (LAYI…FYLI), 82 to 102 (FWCY…VLHF), 107 to 127 (TLMM…APAA), 143 to 163 (YFSI…KEPY), and 164 to 184 (TQFI…IYYS).

This sequence belongs to the AgrB family.

It is found in the cell membrane. Essential for the production of a quorum sensing system signal molecule, the autoinducing peptide (AIP). This quorum sensing system is responsible for the regulation of the expression of virulence factor genes. Involved in the proteolytic processing of AgrD, the precursor of AIP. This chain is Accessory gene regulator protein B, found in Staphylococcus aureus (strain MRSA252).